The primary structure comprises 330 residues: Beta-ketoacyl-[acyl-carrier-protein] synthase III (330 aa).

Catalysis depends on residues cysteine 111 and histidine 249. The interval 250–254 is ACP-binding; sequence QANTR. Asparagine 279 is an active-site residue.

It belongs to the thiolase-like superfamily. FabH family. In terms of assembly, homodimer.

Its subcellular location is the cytoplasm. The enzyme catalyses malonyl-[ACP] + acetyl-CoA + H(+) = 3-oxobutanoyl-[ACP] + CO2 + CoA. It functions in the pathway lipid metabolism; fatty acid biosynthesis. Its function is as follows. Catalyzes the condensation reaction of fatty acid synthesis by the addition to an acyl acceptor of two carbons from malonyl-ACP. Catalyzes the first condensation reaction which initiates fatty acid synthesis and may therefore play a role in governing the total rate of fatty acid production. Possesses both acetoacetyl-ACP synthase and acetyl transacylase activities. Its substrate specificity determines the biosynthesis of branched-chain and/or straight-chain of fatty acids. The protein is Beta-ketoacyl-[acyl-carrier-protein] synthase III of Pseudomonas aeruginosa (strain LESB58).